The primary structure comprises 287 residues: mRNA-capping enzyme regulatory subunit OPG124 (287 aa).

The protein belongs to the orthopoxvirus mRNA-capping enzyme regulatory subunit family. In terms of assembly, interacts with the catalytic subunit OPG113.

It is found in the virion. Its function is as follows. Regulatory subunit of the mRNA cap enzyme which stabilizes the catalytic subunit and enhances its methyltransferase activity through an allosteric mechanism. Heterodimeric mRNA capping enzyme catalyzes the linkage of a N7-methyl-guanosine moiety to the first transcribed nucleotide (cap 0 structure), whereas the methyltransferase OPG102 is responsible for a second methylation at the 2'-O position of the ribose (cap 1 structure). Also involved in early viral gene transcription termination and intermediate viral gene transcription initiation. Early gene transcription termination requires the termination factor VTF, the DNA-dependent ATPase NPH-I/OPG123 and the RAP94/OPG109 subunit of the viral RNA polymerase, as well as the presence of a specific termination motif. Binds, together with RAP94/OPG109, to the termination motif 5'-UUUUUNU-3' in the nascent early mRNA. This chain is mRNA-capping enzyme regulatory subunit OPG124 (OPG124), found in Bos taurus (Bovine).